We begin with the raw amino-acid sequence, 130 residues long: Small ribosomal subunit protein uS11 (130 aa).

The protein belongs to the universal ribosomal protein uS11 family. Part of the 30S ribosomal subunit. Interacts with proteins S7 and S18. Binds to IF-3.

Functionally, located on the platform of the 30S subunit, it bridges several disparate RNA helices of the 16S rRNA. Forms part of the Shine-Dalgarno cleft in the 70S ribosome. This is Small ribosomal subunit protein uS11 from Bdellovibrio bacteriovorus (strain ATCC 15356 / DSM 50701 / NCIMB 9529 / HD100).